Here is a 356-residue protein sequence, read N- to C-terminus: Holliday junction branch migration complex subunit RuvB (356 aa).

The interval 4 to 191 (TDKLATEQRI…FGIVARLEFY (188 aa)) is large ATPase domain (RuvB-L). ATP is bound by residues L30, R31, G72, K75, T76, T77, 138 to 140 (EDY), R181, Y191, and R228. T76 serves as a coordination point for Mg(2+). The interval 192-262 (DADQLSRIVR…VADAALAMLD (71 aa)) is small ATPAse domain (RuvB-S). Residues 265–356 (PVGFDLMDRK…RDEWDTPDGK (92 aa)) form a head domain (RuvB-H) region. 3 residues coordinate DNA: R301, R320, and R325.

It belongs to the RuvB family. In terms of assembly, homohexamer. Forms an RuvA(8)-RuvB(12)-Holliday junction (HJ) complex. HJ DNA is sandwiched between 2 RuvA tetramers; dsDNA enters through RuvA and exits via RuvB. An RuvB hexamer assembles on each DNA strand where it exits the tetramer. Each RuvB hexamer is contacted by two RuvA subunits (via domain III) on 2 adjacent RuvB subunits; this complex drives branch migration. In the full resolvosome a probable DNA-RuvA(4)-RuvB(12)-RuvC(2) complex forms which resolves the HJ.

The protein resides in the cytoplasm. The enzyme catalyses ATP + H2O = ADP + phosphate + H(+). Its function is as follows. The RuvA-RuvB-RuvC complex processes Holliday junction (HJ) DNA during genetic recombination and DNA repair, while the RuvA-RuvB complex plays an important role in the rescue of blocked DNA replication forks via replication fork reversal (RFR). RuvA specifically binds to HJ cruciform DNA, conferring on it an open structure. The RuvB hexamer acts as an ATP-dependent pump, pulling dsDNA into and through the RuvAB complex. RuvB forms 2 homohexamers on either side of HJ DNA bound by 1 or 2 RuvA tetramers; 4 subunits per hexamer contact DNA at a time. Coordinated motions by a converter formed by DNA-disengaged RuvB subunits stimulates ATP hydrolysis and nucleotide exchange. Immobilization of the converter enables RuvB to convert the ATP-contained energy into a lever motion, pulling 2 nucleotides of DNA out of the RuvA tetramer per ATP hydrolyzed, thus driving DNA branch migration. The RuvB motors rotate together with the DNA substrate, which together with the progressing nucleotide cycle form the mechanistic basis for DNA recombination by continuous HJ branch migration. Branch migration allows RuvC to scan DNA until it finds its consensus sequence, where it cleaves and resolves cruciform DNA. This is Holliday junction branch migration complex subunit RuvB from Burkholderia cenocepacia (strain ATCC BAA-245 / DSM 16553 / LMG 16656 / NCTC 13227 / J2315 / CF5610) (Burkholderia cepacia (strain J2315)).